We begin with the raw amino-acid sequence, 612 residues long: MESQSIFDAKSFLKQLTTRPGVYRMMDARGEVLYVGKARNLKNRVSSYFRNTGVSIKTRALVEKIADIEITITHSETEALLLEQNLIKTLKPPYNILLRDDKSYPYIYLSSHDEYPSLTFRRVRQKKTGKGRFFGPYTSAAAVRESLALLQKIFRIRQCEDSFFSNRSRPCLQHQIGRCSAPCVGLIDPQSYAEDMSHATMFLEGRNPEIINETIQQMEVASAQLDFERAAVLRDQVDYLRRVQEQQAIEGVARDIDAFALSSSLELVVVHGLFIRAGRVVGSKSFYLSERLESDDGDLLSSFLNQYYFGEHAIYGLPQEITTTVGLTDKDALKAAFKEVFNRNVRIEHNVRSNRAEWLHLAQTNANQALSTRMQSQDAQLQRWQSFCDALNLEASVKRVECFDVSHTFGEATVASCVVFGPEGAIKDLYRRYNIKDVPAGDDYHAMEQALTRRYSKLKDSDVGLPDIILIDGGKGQLGIAHQVFDELQITGVTLIGVAKGVTRKPGMETLFISADNSILNLPGDSTALHLIQQIRDEAHRFAITGHRNQRNKKRTQSVLDAVPGIGPKRRRDLLNYFGSVRNIERASLEEIKRVPGISEVIAQTIYAAFHE.

The 79-residue stretch at 18–96 (TRPGVYRMMD…IKTLKPPYNI (79 aa)) folds into the GIY-YIG domain. The UVR domain occupies 208-243 (PEIINETIQQMEVASAQLDFERAAVLRDQVDYLRRV).

This sequence belongs to the UvrC family. Interacts with UvrB in an incision complex.

Its subcellular location is the cytoplasm. Its function is as follows. The UvrABC repair system catalyzes the recognition and processing of DNA lesions. UvrC both incises the 5' and 3' sides of the lesion. The N-terminal half is responsible for the 3' incision and the C-terminal half is responsible for the 5' incision. In Hahella chejuensis (strain KCTC 2396), this protein is UvrABC system protein C.